The primary structure comprises 61 residues: Small ribosomal subunit protein bS21 (61 aa).

Positions 34 to 61 are disordered; sequence KREHYESPSVKRKKKSEAARKRKYKYNK. Over residues 43–61 the composition is skewed to basic residues; that stretch reads VKRKKKSEAARKRKYKYNK.

It belongs to the bacterial ribosomal protein bS21 family.

This is Small ribosomal subunit protein bS21 from Thermoanaerobacter pseudethanolicus (strain ATCC 33223 / 39E) (Clostridium thermohydrosulfuricum).